A 970-amino-acid chain; its full sequence is Protein tweety (970 aa).

Topologically, residues 1–47 (MGDYHEFTDQYKVPVIAKLLHALPHYNITFHKINSTFRPNDEIYLES) are extracellular. N-linked (GlcNAc...) asparagine glycans are attached at residues asparagine 27 and asparagine 34. A helical membrane pass occupies residues 48 to 68 (LGILGSVPAALLIVSLLGLLF). Over 69–89 (YLMTRCCDRKPRPAHSITSLK) the chain is Cytoplasmic. Residues 90 to 110 (VALSIVTVMCCAAIGLGLYGN) form a helical membrane-spanning segment. Over 111 to 219 (DDLHNGLLEV…GDQWELIRWP (109 aa)) the chain is Extracellular. Residues asparagine 136, asparagine 166, and asparagine 183 are each glycosylated (N-linked (GlcNAc...) asparagine). A helical membrane pass occupies residues 220–240 (GTVATLALLLVLCAVLLVGVA). The Cytoplasmic portion of the chain corresponds to 241–246 (RHSRCA). A helical membrane pass occupies residues 247-267 (LILFSVCGLLAVTGSWLMSGL). At 268–395 (YLSSSVAVGD…RGLCEGGLLG (128 aa)) the chain is on the extracellular side. An N-linked (GlcNAc...) asparagine glycan is attached at asparagine 359. The chain crosses the membrane as a helical span at residues 396–416 (LVLMLIASFIAAILLTIMVWV). Topologically, residues 417–970 (DSHTWIYIRK…DESNYAVTEL (554 aa)) are cytoplasmic. Low complexity predominate over residues 532–571 (NAAANMPPTTQAAQQQQQQQAQQQQQQAQQQLGGPQPIYC). Disordered stretches follow at residues 532-587 (NAAA…QHPH), 677-763 (RQNS…NESD), and 849-970 (MKAI…VTEL). A compositionally biased stretch (basic residues) spans 572-587 (HHPHQHPHPHPHQHPH). 3 stretches are compositionally biased toward low complexity: residues 689–700 (HQHPPSLHQQQQ), 707–737 (QQQQ…QQHH), and 745–759 (QHQQ…QQQP). Over residues 852-868 (IPPPRIGTPTSPPPPVA) the composition is skewed to pro residues. Composition is skewed to gly residues over residues 883-894 (QNGGAVVGGGGA) and 931-945 (NGGG…GGGA). Polar residues predominate over residues 961 to 970 (DESNYAVTEL).

This sequence belongs to the tweety family.

It localises to the cell membrane. Its function is as follows. Non-essential protein that probably acts as a chloride channel. This chain is Protein tweety (tty), found in Drosophila melanogaster (Fruit fly).